The primary structure comprises 605 residues: Glucose oxidase (605 aa).

Residues 1–18 form the signal peptide; it reads MVSVFLSTLLLAAATVQA. FAD contacts are provided by Leu52, Thr53, and Glu73. Residue Asn111 is glycosylated (N-linked (GlcNAc...) asparagine). FAD is bound by residues Ser125, Asn129, Gly130, and Ser132. Residues Asn183 and Asn190 are each glycosylated (N-linked (GlcNAc...) asparagine). Cys186 and Cys228 are joined by a disulfide. Val272 is a binding site for FAD. 4 N-linked (GlcNAc...) asparagine glycosylation sites follow: Asn335, Asn375, Asn410, and Asn519. His538 acts as the Proton acceptor in catalysis. 2 residues coordinate O2: Lys559 and Val560. Positions 571 and 583 each coordinate FAD.

The protein belongs to the GMC oxidoreductase family. As to quaternary structure, homodimer. FAD serves as cofactor.

The protein localises to the secreted. Its subcellular location is the cell wall. The protein resides in the cytoplasmic vesicle. It catalyses the reaction beta-D-glucose + O2 = D-glucono-1,5-lactone + H2O2. Its function is as follows. Glucose oxidase catalyzes the oxidation of beta-D-glucose to D-glucono-delta-lactone and hydrogen peroxide in the presence of molecular oxygen. D-glucono-delta-lactone is sequentially hydrolyzed by lactonase to D-gluconic acid, and the resulting hydrogen peroxide is hydrolyzed by catalase to oxygen and water. Glucose oxidase alone indirectly causes toxicity in the presence of glucose and is the active compound of the antifungal antibiotic talaron. Responsible for inhibition of germination of microsclerotia of Verticillium dahliae. This is Glucose oxidase from Talaromyces flavus.